Consider the following 287-residue polypeptide: Co-chaperone protein DjlA (287 aa).

Residues 1-6 (MQIFGK) lie on the Periplasmic side of the membrane. A helical membrane pass occupies residues 7–30 (ILGAFFGFLFGGVFGALFGLFIGH). At 31 to 287 (QFDKARRLSQ…DLIKKEKGFK (257 aa)) the chain is on the cytoplasmic side. The tract at residues 192-213 (GGFGGQQHQSHHSSSHGGWQQA) is disordered. The J domain occupies 221–287 (DAYKILGIDA…DLIKKEKGFK (67 aa)).

In terms of assembly, homodimer.

Its subcellular location is the cell inner membrane. In terms of biological role, regulatory DnaK co-chaperone. Direct interaction between DnaK and DjlA is needed for the induction of the wcaABCDE operon, involved in the synthesis of a colanic acid polysaccharide capsule, possibly through activation of the RcsB/RcsC phosphotransfer signaling pathway. The colanic acid capsule may help the bacterium survive conditions outside the host. This is Co-chaperone protein DjlA from Vibrio vulnificus (strain YJ016).